Here is a 694-residue protein sequence, read N- to C-terminus: Threonine--tRNA ligase (694 aa).

In terms of domain architecture, TGS spans 8 to 74; the sequence is NFVNTSVTTH…EETATFTAVP (67 aa). The catalytic stretch occupies residues 273-579; that stretch reads DHRRLGTELD…LLEHYAGAFP (307 aa). 3 residues coordinate Zn(2+): Cys378, His429, and His556.

The protein belongs to the class-II aminoacyl-tRNA synthetase family. Homodimer. The cofactor is Zn(2+).

The protein localises to the cytoplasm. The enzyme catalyses tRNA(Thr) + L-threonine + ATP = L-threonyl-tRNA(Thr) + AMP + diphosphate + H(+). Catalyzes the attachment of threonine to tRNA(Thr) in a two-step reaction: L-threonine is first activated by ATP to form Thr-AMP and then transferred to the acceptor end of tRNA(Thr). Also edits incorrectly charged L-seryl-tRNA(Thr). The polypeptide is Threonine--tRNA ligase (Corynebacterium efficiens (strain DSM 44549 / YS-314 / AJ 12310 / JCM 11189 / NBRC 100395)).